The chain runs to 367 residues: MASPCLIAFLVFLCAIVSCCSDNPIDSCWRGDSNWGQNRMKLADCAVGFGSSTMGGKGGDFYTVTSADDNPVNPTPGTLRYGATREKTLWIIFSQNMNIKLKMPLYVAGHKTIDGRGADVHLGNGGPCLFMRKVSHVILHGLHIHGCNTSVLGDVLVSESIGVVPVHAQDGDAITMRNVTNAWIDHNSLSDCSDGLIDVTLGSTGITISNNHFFNHHKVMLLGHDDTYDDDKSMKVTVAFNQFGPNAGQRMPRARYGLVHVANNNYDPWNIYAIGGSSNPTILSEGNSFTAPNENYKKEVTKRIGCESTSACANWVWRSTRDAFSNGAYFVSSGKIEETNIYNSNEAFKVENGNAAPQLTKNAGVVA.

An N-terminal signal peptide occupies residues 1-21; that stretch reads MASPCLIAFLVFLCAIVSCCS. Disulfide bonds link cysteine 28/cysteine 45 and cysteine 128/cysteine 147. A glycan (N-linked (GlcNAc...) asparagine) is linked at asparagine 148. Aspartate 170 is a binding site for Ca(2+). Asparagine 178 carries N-linked (GlcNAc...) asparagine glycosylation. Ca(2+)-binding residues include aspartate 194 and aspartate 198. Arginine 250 is a catalytic residue. Cysteine 306 and cysteine 312 are joined by a disulfide.

This sequence belongs to the polysaccharide lyase 1 family. Amb a subfamily. Ca(2+) serves as cofactor.

The catalysed reaction is Eliminative cleavage of (1-&gt;4)-alpha-D-galacturonan to give oligosaccharides with 4-deoxy-alpha-D-galact-4-enuronosyl groups at their non-reducing ends.. The protein operates within glycan metabolism; pectin degradation; 2-dehydro-3-deoxy-D-gluconate from pectin: step 2/5. In terms of biological role, has pectate lyase activity. This chain is Pectate lyase 1, found in Juniperus virginiana (Eastern redcedar).